The sequence spans 191 residues: Elongation factor P (191 aa).

Belongs to the elongation factor P family.

It localises to the cytoplasm. It functions in the pathway protein biosynthesis; polypeptide chain elongation. Involved in peptide bond synthesis. Stimulates efficient translation and peptide-bond synthesis on native or reconstituted 70S ribosomes in vitro. Probably functions indirectly by altering the affinity of the ribosome for aminoacyl-tRNA, thus increasing their reactivity as acceptors for peptidyl transferase. In Bartonella henselae (strain ATCC 49882 / DSM 28221 / CCUG 30454 / Houston 1) (Rochalimaea henselae), this protein is Elongation factor P.